We begin with the raw amino-acid sequence, 213 residues long: Uracil phosphoribosyltransferase (213 aa).

Residues Arg78, Arg103, and 130–138 (DPMLATGGS) contribute to the 5-phospho-alpha-D-ribose 1-diphosphate site. Uracil-binding positions include Ile193 and 198 to 200 (GDA). A 5-phospho-alpha-D-ribose 1-diphosphate-binding site is contributed by Asp199.

This sequence belongs to the UPRTase family. Requires Mg(2+) as cofactor.

It carries out the reaction UMP + diphosphate = 5-phospho-alpha-D-ribose 1-diphosphate + uracil. The protein operates within pyrimidine metabolism; UMP biosynthesis via salvage pathway; UMP from uracil: step 1/1. With respect to regulation, allosterically activated by GTP. Catalyzes the conversion of uracil and 5-phospho-alpha-D-ribose 1-diphosphate (PRPP) to UMP and diphosphate. This is Uracil phosphoribosyltransferase from Bordetella bronchiseptica (strain ATCC BAA-588 / NCTC 13252 / RB50) (Alcaligenes bronchisepticus).